Consider the following 253-residue polypeptide: Phosphoglycerate mutase 2 (253 aa).

T3 is modified (phosphothreonine). Substrate-binding positions include 10 to 17 (RHGESTWN), 23 to 24 (CG), R62, 89 to 92 (ERHY), K100, and 116 to 117 (RR). H11 functions as the Tele-phosphohistidine intermediate in the catalytic mechanism. S14 is modified (phosphoserine). E89 functions as the Proton donor/acceptor in the catalytic mechanism. Residue S118 is modified to Phosphoserine. Phosphotyrosine occurs at positions 132 and 133. S135 carries the post-translational modification Phosphoserine. Position 152 is a phosphothreonine (T152). 187–188 (GN) is a substrate binding site.

Belongs to the phosphoglycerate mutase family. BPG-dependent PGAM subfamily. In terms of assembly, homodimer.

It catalyses the reaction (2R)-2-phosphoglycerate = (2R)-3-phosphoglycerate. The catalysed reaction is (2R)-3-phospho-glyceroyl phosphate = (2R)-2,3-bisphosphoglycerate + H(+). In terms of biological role, interconversion of 3- and 2-phosphoglycerate with 2,3-bisphosphoglycerate as the primer of the reaction. Can also catalyze the reaction of EC 5.4.2.4 (synthase), but with a reduced activity. The chain is Phosphoglycerate mutase 2 (PGAM2) from Bos taurus (Bovine).